Here is a 428-residue protein sequence, read N- to C-terminus: MLDLRLLRENPEATQARLDRRHSSYDIQPLLSLDQQVRQWEQERTQLQARSNEIGRSVGQKMREGADPQSEEIAALREEGNQLKQQIADLEQQERQVRSELDTYLLTLPNLPDETVPLGSSEDENREIHRWGDDRIREGEFAPHWEIGERLGLFDFERSTRIAQSRFVTLLGAGAALERALIAFMLDRQTAAGYTEVAPPYLINSASLTASGQLPKFSEESFRCDRDDLWLTPTAEVPLTSLYRDEILSADQLPLRYCAYTPCFRREAGSYGRDTRGLIRLHQFNKVELYQFVHPDHSEAAHQQLLANAEAILQALELPYRTIELCTGDLGFSAQKTYDIEVWLPSAGRYREISSCSNCGDFQARRANIRFKEAGQKGTRFVHTLNGSGLAVGRTMAAVLENYQQPDGSVRVPEALQPYLRQTVIGQP.

Position 234–236 (234–236 (TAE)) interacts with L-serine. Residue 265–267 (RRE) participates in ATP binding. Residue glutamate 288 participates in L-serine binding. 352–355 (EISS) lines the ATP pocket. Serine 388 contacts L-serine.

The protein belongs to the class-II aminoacyl-tRNA synthetase family. Type-1 seryl-tRNA synthetase subfamily. As to quaternary structure, homodimer. The tRNA molecule binds across the dimer.

It localises to the cytoplasm. It carries out the reaction tRNA(Ser) + L-serine + ATP = L-seryl-tRNA(Ser) + AMP + diphosphate + H(+). The catalysed reaction is tRNA(Sec) + L-serine + ATP = L-seryl-tRNA(Sec) + AMP + diphosphate + H(+). The protein operates within aminoacyl-tRNA biosynthesis; selenocysteinyl-tRNA(Sec) biosynthesis; L-seryl-tRNA(Sec) from L-serine and tRNA(Sec): step 1/1. In terms of biological role, catalyzes the attachment of serine to tRNA(Ser). Is also able to aminoacylate tRNA(Sec) with serine, to form the misacylated tRNA L-seryl-tRNA(Sec), which will be further converted into selenocysteinyl-tRNA(Sec). The polypeptide is Serine--tRNA ligase (Synechococcus elongatus (strain ATCC 33912 / PCC 7942 / FACHB-805) (Anacystis nidulans R2)).